Reading from the N-terminus, the 916-residue chain is DNA mismatch repair protein MutS (916 aa).

The segment at 1 to 47 (MSEALSVPAAEGENTVTASESPDLAATSARAEKVGKQEKPEKAEKQS) is disordered. The span at 30–45 (RAEKVGKQEKPEKAEK) shows a compositional bias: basic and acidic residues. An ATP-binding site is contributed by 656 to 663 (GPNMGGKS). Over residues 843 to 861 (ADATPTPQMDLFSAQSSPS) the composition is skewed to polar residues. The tract at residues 843–880 (ADATPTPQMDLFSAQSSPSADDEDDKSAGQSAVPPAQA) is disordered.

This sequence belongs to the DNA mismatch repair MutS family.

This protein is involved in the repair of mismatches in DNA. It is possible that it carries out the mismatch recognition step. This protein has a weak ATPase activity. In Cupriavidus metallidurans (strain ATCC 43123 / DSM 2839 / NBRC 102507 / CH34) (Ralstonia metallidurans), this protein is DNA mismatch repair protein MutS.